We begin with the raw amino-acid sequence, 297 residues long: MAEPKSFNIPYRSKLTERIEPGQTLIIRGKTIDESKRFNINLHKDSPDFSGNDVPLHLSIRFDEGKIVYNAYTKGTWGKEERAKNPIKKGDDFDIRIRAHDSKFQVSINHKEVKNFEHRIPLNSVSHLSIDGDVVLNHVQWGGKYYPVPYESGIAADGLVPGKTLVVYGTPEKKAKKFNINLLKKNGDIALHFNPRFDEKANGFMCAKPTPGSVVRNSLVNGEWGNEEREGKNPFERLTAFDLEIRNEEFAFQIFVNGERFASYAHRVDPHDIAGLQIQGDIELTGIQVVNNQPAQE.

2 consecutive Galectin domains span residues Y11 to G142 and E151 to V290. Position 224–230 (W224–E230) interacts with a beta-D-galactoside.

Its function is as follows. Binds galactose. In Caenorhabditis elegans, this protein is 32 kDa beta-galactoside-binding lectin lec-3 (lec-3).